Here is a 237-residue protein sequence, read N- to C-terminus: Class B acid phosphatase (237 aa).

The first 25 residues, methionine 1–alanine 25, serve as a signal peptide directing secretion. Aspartate 69 acts as the Nucleophile in catalysis. 2 residues coordinate Mg(2+): aspartate 69 and aspartate 71. Aspartate 71 functions as the Proton donor in the catalytic mechanism. Substrate is bound by residues threonine 137–glycine 138 and lysine 177. Position 192 (aspartate 192) interacts with Mg(2+).

This sequence belongs to the class B bacterial acid phosphatase family. In terms of assembly, homotetramer. Mg(2+) is required as a cofactor.

Its subcellular location is the periplasm. The enzyme catalyses a phosphate monoester + H2O = an alcohol + phosphate. Its function is as follows. Dephosphorylates several organic phosphate monoesters. Also has a phosphotransferase activity catalyzing the transfer of low-energy phosphate groups from organic phosphate monoesters to free hydroxyl groups of various organic compounds. The polypeptide is Class B acid phosphatase (Klebsiella pneumoniae (strain 342)).